Reading from the N-terminus, the 491-residue chain is UDP-N-acetylmuramate--L-alanine ligase (491 aa).

126 to 132 (GTHGKTT) provides a ligand contact to ATP.

Belongs to the MurCDEF family.

The protein localises to the cytoplasm. It carries out the reaction UDP-N-acetyl-alpha-D-muramate + L-alanine + ATP = UDP-N-acetyl-alpha-D-muramoyl-L-alanine + ADP + phosphate + H(+). It functions in the pathway cell wall biogenesis; peptidoglycan biosynthesis. Cell wall formation. The chain is UDP-N-acetylmuramate--L-alanine ligase from Salmonella paratyphi A (strain ATCC 9150 / SARB42).